The following is an 84-amino-acid chain: Large ribosomal subunit protein bL27 (84 aa).

The disordered stretch occupies residues 1-21 (MAHKKGGGSTKNGRDSNPKYL).

This sequence belongs to the bacterial ribosomal protein bL27 family.

The protein is Large ribosomal subunit protein bL27 of Pelodictyon phaeoclathratiforme (strain DSM 5477 / BU-1).